The primary structure comprises 911 residues: DNA mismatch repair protein MutS (911 aa).

Residues 1 to 95 (MALQGNLFGD…PWSHHSQVTP (95 aa)) are disordered. The span at 23–42 (KRQDEPDQLDDHELTQDAKQ) shows a compositional bias: basic and acidic residues. 727–734 (GPNASGKS) is an ATP binding site.

It belongs to the DNA mismatch repair MutS family.

Its function is as follows. This protein is involved in the repair of mismatches in DNA. It is possible that it carries out the mismatch recognition step. This protein has a weak ATPase activity. The protein is DNA mismatch repair protein MutS of Synechococcus sp. (strain CC9311).